Consider the following 70-residue polypeptide: Deleted in esophageal cancer 1 (70 aa).

As to expression, expressed in many tissues, with highest expression in prostate and testis. Reduced expression in esophageal carcinomas.

Its function is as follows. Candidate tumor suppressor. The protein is Deleted in esophageal cancer 1 of Homo sapiens (Human).